Here is a 449-residue protein sequence, read N- to C-terminus: Hyaluronidase (449 aa).

An N-terminal signal peptide occupies residues 1 to 23; the sequence is MYHLWIKCLAAWIFLKRFNGVHV. 2 cysteine pairs are disulfide-bonded: Cys47–Cys340 and Cys211–Cys227. Residues Asn67, Asn103, and Asn111 are each glycosylated (N-linked (GlcNAc...) asparagine). Glu135 serves as the catalytic Proton donor. An N-linked (GlcNAc...) asparagine glycan is attached at Asn153. The N-linked (GlcNAc...) asparagine glycan is linked to Asn357. Intrachain disulfides connect Cys365/Cys376, Cys370/Cys427, and Cys429/Cys438. An N-linked (GlcNAc...) asparagine glycan is attached at Asn401. Residues 427–438 enclose the EGF-like domain; sequence CQCYQGWKGLYC.

This sequence belongs to the glycosyl hydrolase 56 family. In terms of assembly, monomer. Expressed by the venom gland.

It is found in the secreted. It catalyses the reaction Random hydrolysis of (1-&gt;4)-linkages between N-acetyl-beta-D-glucosamine and D-glucuronate residues in hyaluronate.. Snake venom endo-hyaluronidase that degrades hyaluronan to smaller oligosaccharide fragments. In venom, it is not toxic by itself, but increases the diffusion of other venom proteins by degrading the extracellular matrix. In addition, it displays antiedematogenic activity. The protein is Hyaluronidase of Crotalus adamanteus (Eastern diamondback rattlesnake).